The chain runs to 410 residues: Solute carrier family 52, riboflavin transporter, member 3 (410 aa).

The next 3 helical transmembrane spans lie at 3–23 (ILIY…INGL), 40–60 (LPSY…LVTL), and 73–93 (VVIY…AFFL). N-linked (GlcNAc...) asparagine glycosylation is present at N157. The next 6 helical transmembrane spans lie at 158-178 (FTTE…LAAF), 239-259 (FQLT…NGLL), 277-297 (LSAA…MFFP), 301-321 (LVFL…NMAM), 334-354 (ALGE…LSYV), and 369-389 (ALVW…VIMF).

This sequence belongs to the riboflavin transporter family.

The protein resides in the cell membrane. The enzyme catalyses riboflavin(in) = riboflavin(out). Its function is as follows. Plasma membrane transporter mediating the uptake by cells of the water soluble vitamin B2/riboflavin that plays a key role in biochemical oxidation-reduction reactions of the carbohydrate, lipid, and amino acid metabolism. This is Solute carrier family 52, riboflavin transporter, member 3 (slc52a3) from Osmerus mordax (Rainbow smelt).